We begin with the raw amino-acid sequence, 310 residues long: MGLFESVKSIDWEQESFPTYQDLGFLPLFAVFFPTIRFLLDRFVFEKLASLVIYGRMSTNKSDNIKDRKKNSPKVRKFKESAWKCIYYLSAELLALSVTYNEPWFSNTLYFWIGPGDQIWPDQPMKMKLKFLYMFAAGFYTYSIFALVFWETRRSDFGVSMGHHITTLVLIVLSYICRLTRAGSVILALHDASDVFLEIGKMSKYCGAESLASISFVLFALSWVVLRLIYYPFWILWSTSYQIIMTVDKEKHPNGPILYYMFNTLLYFLLVLHIFWWVLIYRMLVKQVQDRGKLSEDVRSDSESDDEHED.

The next 6 membrane-spanning stretches (helical) occupy residues 16-36 (SFPTYQDLGFLPLFAVFFPTI), 85-105 (CIYYLSAELLALSVTYNEPWF), 131-151 (FLYMFAAGFYTYSIFALVFWE), 157-177 (FGVSMGHHITTLVLIVLSYIC), 216-236 (FVLFALSWVVLRLIYYPFWIL), and 260-280 (YMFNTLLYFLLVLHIFWWVLI). One can recognise a TLC domain in the interval 76-289 (RKFKESAWKC…IYRMLVKQVQ (214 aa)). Phosphoserine occurs at positions 300 and 302.

In terms of tissue distribution, expressed ubiquitously at high levels. Not observed in pollen.

The protein resides in the endoplasmic reticulum membrane. It catalyses the reaction (4R)-hydroxysphinganine + a fatty acyl-CoA = an N-acyl-(4R)-4-hydroxysphinganine + CoA + H(+). It carries out the reaction hexacosanoyl-CoA + (4R)-hydroxysphinganine = N-hexacosanoyl-(4R)-hydroxysphinganine + CoA + H(+). The enzyme catalyses tetracosanoyl-CoA + (4R)-hydroxysphinganine = N-tetracosanoyl-(4R)-hydroxysphinganine + CoA + H(+). The protein operates within sphingolipid metabolism. Inhibited by the mycotoxin fumonisin B(1), a sphingosine analog mycotoxins produced by pathogenic fungi. Repressed by divalent cation such as magnesium Mg(2+), copper Cu(2+), zinc Zn(2+), manganese Mn(2+), calcium Ca(2+) and cobalt Co(2+). Functionally, essential for plant growth, promotes cell division in root meristems. Catalyzes the biosynthesis of ceramide sphingolipids with C(16) to C(28) fatty acids, structural membrane lipids involved in membrane trafficking (e.g. early endosomes) and cell polarity (e.g. polar auxin transport related proteins); mostly active with t18:0 and saturated very long saturated fatty acids (C24:0 and C26:0), such as long-chain base (LCB) phytosphingosine (t18:0), lignoceroyl- and hexacosanoyl-CoAs. Mediates resistance to sphinganine-analog mycotoxins (SAMs, e.g. fumonisin B(1)) by restoring the sphingolipid biosynthesis. Could salvage the transport of GPI-anchored proteins from the endoplasmic reticulum to the Golgi apparatus in ceramides-depleted cells after SAM exposure. May prevent precocious cell death by delaying PR1 accumulation during aging. Contributes to hypoxic conditions tolerance (e.g. submergences), especially in the dark, by promoting the formation of very-long-chain (VLC) ceramide species (22:1, 24:1 and 26:1) and of VLC unsaturated ceramides, which are modulating CTR1-mediated ethylene signaling leading to endoplasmic reticulum (ER)-to-nucleus translocation of EIN2 and EIN3. This chain is Ceramide synthase LOH1, found in Arabidopsis thaliana (Mouse-ear cress).